A 258-amino-acid chain; its full sequence is Retron Ec83 putative HNH endonuclease (258 aa).

Its function is as follows. Putative HNH endonuclease component of antiviral defense system retron Ec83, composed of a non-coding RNA (ncRNA), a reverse transcriptase (RT), a probable ATPase and this protein. Expression of retron Ec78 confers protection against bacteriophage T2, T4 and T6. At multiplicity of infection (MOI) of 0.02 cultures slow growth when infected with T4 but do not collapse, at MOI 2 cultures enter growth stasis. This Escherichia coli protein is Retron Ec83 putative HNH endonuclease.